Here is a 134-residue protein sequence, read N- to C-terminus: Profilin-2 (134 aa).

A disulfide bond links Cys-13 and Cys-118. The Involved in PIP2 interaction signature appears at 84–100 (AVIRGKKGSGGITIKET). At Thr-114 the chain carries Phosphothreonine.

Belongs to the profilin family. Occurs in many kinds of cells as a complex with monomeric actin in a 1:1 ratio. Phosphorylated by MAP kinases.

Its subcellular location is the cytoplasm. The protein resides in the cytoskeleton. Binds to actin and affects the structure of the cytoskeleton. At high concentrations, profilin prevents the polymerization of actin, whereas it enhances it at low concentrations. This chain is Profilin-2, found in Olea europaea (Common olive).